The sequence spans 359 residues: Transcription elongation factor A N-terminal and central domain-containing protein (359 aa).

Positions 1–82 constitute a TFIIS N-terminal domain; that stretch reads MSDKNQIIAR…AKWRGFYKST (82 aa). A disordered region spans residues 84-118; sequence CKPRQSPKVLHTNANKEESAAVSQDVSQDETSGSS. Over residues 104 to 118 the composition is skewed to polar residues; the sequence is AVSQDVSQDETSGSS. A TFIIS central domain is found at 182 to 298; sequence VRSKCVELLY…EHCLPQSVDG (117 aa).

This Mus musculus (Mouse) protein is Transcription elongation factor A N-terminal and central domain-containing protein (Tceanc).